Consider the following 197-residue polypeptide: Molybdenum cofactor guanylyltransferase (197 aa).

GTP-binding positions include 10-12, lysine 23, aspartate 69, and aspartate 99; that span reads LAG. Residue aspartate 99 participates in Mg(2+) binding.

It belongs to the MobA family. In terms of assembly, monomer. The cofactor is Mg(2+).

The protein localises to the cytoplasm. It carries out the reaction Mo-molybdopterin + GTP + H(+) = Mo-molybdopterin guanine dinucleotide + diphosphate. Functionally, transfers a GMP moiety from GTP to Mo-molybdopterin (Mo-MPT) cofactor (Moco or molybdenum cofactor) to form Mo-molybdopterin guanine dinucleotide (Mo-MGD) cofactor. The chain is Molybdenum cofactor guanylyltransferase from Serratia proteamaculans (strain 568).